The following is a 2771-amino-acid chain: Teneurin-4 (2771 aa).

Residues 1–22 show a composition bias toward basic and acidic residues; sequence MDVKERKPYRSLTRRRDAERRY. Residues 1–45 form a disordered region; that stretch reads MDVKERKPYRSLTRRRDAERRYTSSSADSEEGKGPQKSYSSSETL. Positions 1–341 constitute a Teneurin N-terminal domain; that stretch reads MDVKERKPYR…KPSKYCNWKC (341 aa). The Cytoplasmic portion of the chain corresponds to 1-345; the sequence is MDVKERKPYR…YCNWKCAALS (345 aa). Serine 124 carries the post-translational modification Phosphoserine. A disordered region spans residues 132–233; it reads WGRSTRSGRS…PPAGSAQEPT (102 aa). The segment covering 134-155 has biased composition (low complexity); the sequence is RSTRSGRSSCLSSRANSNLTLT. Over residues 156 to 166 the composition is skewed to basic and acidic residues; the sequence is DTEHENTETDH. At threonine 178 the chain carries Phosphothreonine. Polar residues predominate over residues 191-211; that stretch reads QHHAASINSLNRGNFTPRSNP. Residues 346 to 366 traverse the membrane as a helical segment; the sequence is AILISATLVILLAYFVAMHLF. Residues 367-2771 are Extracellular-facing; sequence GLNWHLQPME…FMRQSEMGRR (2405 aa). The disordered stretch occupies residues 403 to 428; that stretch reads SGGTGLETPDRKGKGAAEGKPSSLFP. Positions 410-419 are enriched in basic and acidic residues; the sequence is TPDRKGKGAA. Asparagine 469 carries an N-linked (GlcNAc...) asparagine glycan. Residues 509–528 are disordered; that stretch reads ARSLEGPQRQSRGPVPPSSH. 8 EGF-like domains span residues 564–595, 596–626, 628–660, 661–692, 694–727, 728–759, 760–789, and 790–833; these read SVDN…PDCG, RASC…AECD, PTNQ…ESCE, EVDC…TNCE, PRAT…HDCS, IEIC…ACDQ, RACH…EHCT, and IAHY…TGCD. 22 disulfides stabilise this stretch: cysteine 568-cysteine 578, cysteine 572-cysteine 583, cysteine 585-cysteine 594, cysteine 603-cysteine 614, cysteine 616-cysteine 625, cysteine 632-cysteine 643, cysteine 637-cysteine 648, cysteine 650-cysteine 659, cysteine 664-cysteine 675, cysteine 669-cysteine 680, cysteine 682-cysteine 691, cysteine 702-cysteine 715, cysteine 717-cysteine 726, cysteine 731-cysteine 741, cysteine 735-cysteine 746, cysteine 748-cysteine 757, cysteine 762-cysteine 772, cysteine 766-cysteine 777, cysteine 779-cysteine 788, cysteine 802-cysteine 812, cysteine 806-cysteine 821, and cysteine 823-cysteine 832. N-linked (GlcNAc...) asparagine glycosylation is found at asparagine 942 and asparagine 1261. 5 NHL repeats span residues 1218–1261, 1266–1310, 1336–1380, 1395–1446, and 1525–1568; these read SCPS…PSGN, LEMR…VKST, TRCG…NGII, LSCD…VAGR, and CFSG…IRKN. A YD 1 repeat occupies 1578-1597; sequence YELSSPIDQELYLFDTSGKH. N-linked (GlcNAc...) asparagine glycosylation is present at asparagine 1611. YD repeat units follow at residues 1614–1634, 1677–1696, and 1697–1719; these read YTGD…VNVR, YHGN…WTTF, and YEYD…SSFR. N-linked (GlcNAc...) asparagine glycans are attached at residues asparagine 1707, asparagine 1743, asparagine 1801, and asparagine 1886. YD repeat units follow at residues 1889-1908, 1930-1948, 1949-1969, 1976-1993, 1994-2015, 2016-2033, 2036-2056, 2059-2079, 2087-2106, 2112-2129, 2130-2156, 2158-2171, 2172-2195, 2198-2218, 2219-2239, 2241-2261, 2273-2293, and 2295-2315; these read YSPG…ERME, YLEK…YIFE, FDKN…QTLE, YYRN…VIQD, FTED…VIYK, YGKL…TKVS, YDET…FTCT, YRQI…EGMV, YDNS…TPLP, YDDV…GVIY, YDIN…MKEV, YEIF…MTVQ, YDNM…TRYS, YDAD…WRYS, YDLN…LTPL, YDLR…DEDG, YNSA…SVRY, and YDGL…LQFF. Asparagine 1987 carries an N-linked (GlcNAc...) asparagine glycan. N-linked (GlcNAc...) asparagine glycosylation occurs at asparagine 2190. A glycan (N-linked (GlcNAc...) asparagine) is linked at asparagine 2330. One copy of the YD 23 repeat lies at 2341-2382; that stretch reads YDLQGHLFAMELSSGDEFYIACDNIGTPLAVFSGTGLMIKQI. Asparagine 2648 carries an N-linked (GlcNAc...) asparagine glycan.

Belongs to the tenascin family. Teneurin subfamily. Homodimer; disulfide-linked. May also form heterodimer with either TENM1 or TENM2 or TENM3. As to expression, expressed in brain and spinal cord (at protein level). Expressed in neurons and oligodendrocytes of the spinal cord. Expressed weakly in kidney, lung and spleen. Expressed in the cortex, CA1, CA2 and CA3 of the hippocampus. Expressed in the white matter, Purkinje cells and molecular layer of the cerebellum.

It is found in the cell membrane. It localises to the cell projection. The protein localises to the nucleus. The protein resides in the cytoplasm. Functionally, involved in neural development, regulating the establishment of proper connectivity within the nervous system. Plays a role in the establishment of the anterior-posterior axis during gastrulation. Regulates the differentiation and cellular process formation of oligodendrocytes and myelination of small-diameter axons in the central nervous system (CNS). Promotes activation of focal adhesion kinase. May function as a cellular signal transducer. This Mus musculus (Mouse) protein is Teneurin-4 (Tenm4).